We begin with the raw amino-acid sequence, 143 residues long: Hemoglobin subunit alpha (143 aa).

One can recognise a Globin domain in the interval Arg-2 to Arg-143. His-60 serves as a coordination point for O2. His-89 is a heme b binding site.

It belongs to the globin family. In terms of assembly, heterotetramer of two alpha chains and two beta chains. Red blood cells.

Functionally, involved in oxygen transport from the lung to the various peripheral tissues. The polypeptide is Hemoglobin subunit alpha (HBA) (Lepidosiren paradoxus (South American lungfish)).